The sequence spans 465 residues: Cytochrome c peroxidase Ccp (465 aa).

The Cytoplasmic segment spans residues 1–6 (MKMVSR). A helical membrane pass occupies residues 7–27 (ITAIGLAGVAICYLGLSGYVW). The Periplasmic segment spans residues 28–465 (YHDNKRSKQA…VYTPYMQDKQ (438 aa)). 3 Cytochrome c domains span residues 42 to 155 (SAVS…AKQR), 185 to 287 (QKVA…EKDP), and 337 to 454 (AQQK…HSLN). Residues cysteine 59, cysteine 62, histidine 63, methionine 125, cysteine 207, cysteine 210, histidine 211, cysteine 351, cysteine 354, histidine 355, and methionine 429 each coordinate heme c.

In terms of assembly, the recombinant enzyme lacking its transmembrane domain is a monomer in solution. The cofactor is heme c.

Its subcellular location is the cell inner membrane. With respect to regulation, does not require reductive activation for maximum activity, as peroxidatic heme is high-spin His/OH(-) 6-coordinated. Calcium ions are needed to attain maximum peroxidase activity. In terms of biological role, cytochrome peroxidase that enables anaerobic respiration with H(2)O(2) as a terminal electron acceptor. It receives electrons from the quinol pool. Menaquinol is probably the electron donor in vivo. It can use menadiol (a menaquinol analog), hydroquinone, duroquinol and the artificial electron donor ABTS(2-) in vitro, but only menadiol and hydroquinone can efficiently transfer electrons to Ccp, maintaining the catalytic activity of the enzyme. It enables E.coli to grow on a nonfermentable carbon source when H(2)O(2) is supplied. Plays a role in the peroxide stress response under anaerobic conditions. However, it does not degrade H(2)O(2) quickly enough to lower the periplasmic H(2)O(2) level below that of the surrounding medium and protect the cell from its toxic effects. The polypeptide is Cytochrome c peroxidase Ccp (Escherichia coli (strain K12)).